The following is a 404-amino-acid chain: Cysteine desulfurase IscS (404 aa).

Residues 75–76 (AT), N155, Q183, and 203–205 (SGH) each bind pyridoxal 5'-phosphate. K206 carries the N6-(pyridoxal phosphate)lysine modification. Position 243 (T243) interacts with pyridoxal 5'-phosphate. The active-site Cysteine persulfide intermediate is C328. Residue C328 coordinates [2Fe-2S] cluster.

It belongs to the class-V pyridoxal-phosphate-dependent aminotransferase family. NifS/IscS subfamily. Homodimer. Forms a heterotetramer with IscU, interacts with other sulfur acceptors. Pyridoxal 5'-phosphate is required as a cofactor.

It localises to the cytoplasm. The catalysed reaction is (sulfur carrier)-H + L-cysteine = (sulfur carrier)-SH + L-alanine. The protein operates within cofactor biosynthesis; iron-sulfur cluster biosynthesis. In terms of biological role, master enzyme that delivers sulfur to a number of partners involved in Fe-S cluster assembly, tRNA modification or cofactor biosynthesis. Catalyzes the removal of elemental sulfur atoms from cysteine to produce alanine. Functions as a sulfur delivery protein for Fe-S cluster synthesis onto IscU, an Fe-S scaffold assembly protein, as well as other S acceptor proteins. The chain is Cysteine desulfurase IscS from Shewanella oneidensis (strain ATCC 700550 / JCM 31522 / CIP 106686 / LMG 19005 / NCIMB 14063 / MR-1).